The primary structure comprises 232 residues: Ribose-5-phosphate isomerase A (232 aa).

Residues 28–31 (TGST), 83–86 (DGAD), and 96–99 (KGGG) contribute to the substrate site. E105 functions as the Proton acceptor in the catalytic mechanism. Residue K123 coordinates substrate.

Belongs to the ribose 5-phosphate isomerase family. Homodimer.

It carries out the reaction aldehydo-D-ribose 5-phosphate = D-ribulose 5-phosphate. It participates in carbohydrate degradation; pentose phosphate pathway; D-ribose 5-phosphate from D-ribulose 5-phosphate (non-oxidative stage): step 1/1. Functionally, catalyzes the reversible conversion of ribose-5-phosphate to ribulose 5-phosphate. The protein is Ribose-5-phosphate isomerase A of Rhizobium etli (strain ATCC 51251 / DSM 11541 / JCM 21823 / NBRC 15573 / CFN 42).